The following is a 587-amino-acid chain: ATP-dependent lipid A-core flippase (587 aa).

The next 5 helical transmembrane spans lie at 31–51 (LIVS…LIYL), 68–88 (LKMM…TNFI), 145–165 (GSLI…AVMF), 166–186 (YTSW…AVLI), and 259–279 (VQVI…TPLI). Positions 32 to 315 (IVSGVALVFN…LTAVNAQFQS (284 aa)) constitute an ABC transmembrane type-1 domain. Residues 347 to 583 (LEFKNVSFAY…NGAYKQLHSM (237 aa)) form the ABC transporter domain. Residue 381 to 388 (GRSGSGKS) participates in ATP binding.

It belongs to the ABC transporter superfamily. Lipid exporter (TC 3.A.1.106) family. In terms of assembly, homodimer.

It localises to the cell inner membrane. It catalyses the reaction ATP + H2O + lipid A-core oligosaccharideSide 1 = ADP + phosphate + lipid A-core oligosaccharideSide 2.. Involved in lipopolysaccharide (LPS) biosynthesis. Translocates lipid A-core from the inner to the outer leaflet of the inner membrane. Transmembrane domains (TMD) form a pore in the inner membrane and the ATP-binding domain (NBD) is responsible for energy generation. The protein is ATP-dependent lipid A-core flippase of Haemophilus influenzae (strain ATCC 51907 / DSM 11121 / KW20 / Rd).